A 105-amino-acid chain; its full sequence is MKYAIVEISGRQFWIETGKYYDFNRIPTELGKQITLNRVLLLNNEGEILIGKPYLDSVKIKGKILEHLRGKKTIVYKMRPKKKTRKKQGHRQELTRVLIEDIIIN.

The protein belongs to the bacterial ribosomal protein bL21 family. As to quaternary structure, part of the 50S ribosomal subunit.

The protein resides in the plastid. It is found in the chloroplast. Its function is as follows. This protein binds to 23S rRNA. The protein is Large ribosomal subunit protein bL21c of Phaeodactylum tricornutum (strain CCAP 1055/1).